Reading from the N-terminus, the 432-residue chain is CinA-like protein (432 aa).

It belongs to the CinA family.

The sequence is that of CinA-like protein from Colwellia psychrerythraea (strain 34H / ATCC BAA-681) (Vibrio psychroerythus).